A 154-amino-acid chain; its full sequence is Transcriptional repressor NrdR (154 aa).

Residues 3-34 (CPFCGANDTKVIDSRLVAEGEQVRRRRECLAC) fold into a zinc finger. Positions 49 to 139 (PRLIKTDGSR…VYRRFQDLNE (91 aa)) constitute an ATP-cone domain.

This sequence belongs to the NrdR family. Zn(2+) is required as a cofactor.

In terms of biological role, negatively regulates transcription of bacterial ribonucleotide reductase nrd genes and operons by binding to NrdR-boxes. The protein is Transcriptional repressor NrdR of Pseudomonas fluorescens (strain ATCC BAA-477 / NRRL B-23932 / Pf-5).